Consider the following 332-residue polypeptide: MQTIINKLYEQQGLTQAESQQLFDQIIRGEMDPVLMAAVLTALKIKGETPDEIAGAAKALLANANPFPRPDYDFADIVGTGGDGSNTINISTTAAFVAAACGVKVAKHGNRGVSSKSGSSDLLSSFGINLAMSAQDSRQALDDLGVAFLFAPQYHGGVRHAMPVRQTMKTRTIFNILGPLINPARPNIELMGVYSKDLVRPIAQTMLQMGLKRAAVVHGSGLDEVAIHGETQVAEIRQGELIEYTLTPEDFGVSRYPLDAIRGGEPEENRAIITQILTGNGTAAQMAAVAVNVALLLRLFGQEDLKANTQQAIAVMKSGQAYGLVQQLAQRG.

Residues G79, 82–83 (GD), T87, 89–92 (NIST), 107–115 (KHGNRGVSS), and S119 each bind 5-phospho-alpha-D-ribose 1-diphosphate. G79 is an anthranilate binding site. Position 91 (S91) interacts with Mg(2+). N110 contributes to the anthranilate binding site. An anthranilate-binding site is contributed by R165. D223 and E224 together coordinate Mg(2+).

The protein belongs to the anthranilate phosphoribosyltransferase family. As to quaternary structure, homodimer. Requires Mg(2+) as cofactor.

It carries out the reaction N-(5-phospho-beta-D-ribosyl)anthranilate + diphosphate = 5-phospho-alpha-D-ribose 1-diphosphate + anthranilate. It participates in amino-acid biosynthesis; L-tryptophan biosynthesis; L-tryptophan from chorismate: step 2/5. Catalyzes the transfer of the phosphoribosyl group of 5-phosphorylribose-1-pyrophosphate (PRPP) to anthranilate to yield N-(5'-phosphoribosyl)-anthranilate (PRA). The sequence is that of Anthranilate phosphoribosyltransferase from Vibrio cholerae serotype O1 (strain ATCC 39541 / Classical Ogawa 395 / O395).